The primary structure comprises 702 residues: Ribosomal RNA large subunit methyltransferase K/L (702 aa).

Residues 43–154 (LVYQSLMWSR…KETASIALDL (112 aa)) enclose the THUMP domain.

The protein belongs to the methyltransferase superfamily. RlmKL family.

The protein localises to the cytoplasm. The enzyme catalyses guanosine(2445) in 23S rRNA + S-adenosyl-L-methionine = N(2)-methylguanosine(2445) in 23S rRNA + S-adenosyl-L-homocysteine + H(+). It carries out the reaction guanosine(2069) in 23S rRNA + S-adenosyl-L-methionine = N(2)-methylguanosine(2069) in 23S rRNA + S-adenosyl-L-homocysteine + H(+). In terms of biological role, specifically methylates the guanine in position 2445 (m2G2445) and the guanine in position 2069 (m7G2069) of 23S rRNA. This Escherichia coli O139:H28 (strain E24377A / ETEC) protein is Ribosomal RNA large subunit methyltransferase K/L.